We begin with the raw amino-acid sequence, 195 residues long: Imidazoleglycerol-phosphate dehydratase (195 aa).

This sequence belongs to the imidazoleglycerol-phosphate dehydratase family.

The protein localises to the cytoplasm. It catalyses the reaction D-erythro-1-(imidazol-4-yl)glycerol 3-phosphate = 3-(imidazol-4-yl)-2-oxopropyl phosphate + H2O. It functions in the pathway amino-acid biosynthesis; L-histidine biosynthesis; L-histidine from 5-phospho-alpha-D-ribose 1-diphosphate: step 6/9. This is Imidazoleglycerol-phosphate dehydratase from Pelotomaculum thermopropionicum (strain DSM 13744 / JCM 10971 / SI).